Reading from the N-terminus, the 434-residue chain is Nicotinate phosphoribosyltransferase (434 aa).

At His-242 the chain carries Phosphohistidine; by autocatalysis.

It belongs to the NAPRTase family. Post-translationally, transiently phosphorylated on a His residue during the reaction cycle. Phosphorylation strongly increases the affinity for substrates and increases the rate of nicotinate D-ribonucleotide production. Dephosphorylation regenerates the low-affinity form of the enzyme, leading to product release.

It catalyses the reaction nicotinate + 5-phospho-alpha-D-ribose 1-diphosphate + ATP + H2O = nicotinate beta-D-ribonucleotide + ADP + phosphate + diphosphate. Its pathway is cofactor biosynthesis; NAD(+) biosynthesis; nicotinate D-ribonucleotide from nicotinate: step 1/1. Catalyzes the synthesis of beta-nicotinate D-ribonucleotide from nicotinate and 5-phospho-D-ribose 1-phosphate at the expense of ATP. In Brucella melitensis biotype 1 (strain ATCC 23456 / CCUG 17765 / NCTC 10094 / 16M), this protein is Nicotinate phosphoribosyltransferase.